Reading from the N-terminus, the 250-residue chain is 5'-nucleotidase SurE (250 aa).

The a divalent metal cation site is built by Asp8, Asp9, Ser39, and Asn91.

It belongs to the SurE nucleotidase family. The cofactor is a divalent metal cation.

It is found in the cytoplasm. The enzyme catalyses a ribonucleoside 5'-phosphate + H2O = a ribonucleoside + phosphate. Functionally, nucleotidase that shows phosphatase activity on nucleoside 5'-monophosphates. The chain is 5'-nucleotidase SurE from Leptospira borgpetersenii serovar Hardjo-bovis (strain L550).